A 263-amino-acid polypeptide reads, in one-letter code: Receptor-transporting protein 1 (263 aa).

The Cytoplasmic portion of the chain corresponds to 1 to 238 (MRIFRPWRLR…ETGSGCNFCS (238 aa)). A 3CxxC-type zinc finger spans residues 88 to 197 (ASGRFHCSWC…GEFCEACQEG (110 aa)). The helical transmembrane segment at 239–259 (IPWCLFWATVLMLIIYLQFSF) threads the bilayer. Over 260–263 (RTSV) the chain is Extracellular.

It belongs to the TMEM7 family. In terms of assembly, interacts with olfactory receptors. Predominantly expressed in olfactory and vomeronasal organs, in mature olfactory sensory neurons.

The protein resides in the cell membrane. Its function is as follows. Specifically promotes functional cell surface expression of olfactory receptors, but not of other GPCRs. This chain is Receptor-transporting protein 1 (Rtp1), found in Mus musculus (Mouse).